Consider the following 594-residue polypeptide: Metastasis-associated protein MTA3 (594 aa).

Residues 1–147 (MAANMYRVGD…PSLKTLLADK (147 aa)) form the BAH domain. The region spanning 148–259 (GEIRVGPRYQ…SAISVLVPLG (112 aa)) is the ELM2 domain. In terms of domain architecture, SANT spans 266-318 (DEMEEWSASEASLFEEALEKYGKDFNDIRQDFLPWKSLTSIIEYYYMWKTTDR). A GATA-type; atypical zinc finger spans residues 379–406 (CESCYATQSHQWYSWGPPNMQCRLCAIC). Ser-428 and Ser-430 each carry phosphoserine. Thr-455 is subject to Phosphothreonine. Residue Ser-519 is modified to Phosphoserine.

The protein belongs to the metastasis-associated protein family. In terms of assembly, component of the nucleosome remodeling and deacetylase (NuRD) repressor complex, composed of core proteins MTA1, MTA2, MTA3, RBBP4, RBBP7, HDAC1, HDAC2, MBD2, MBD3, and peripherally associated proteins CDK2AP1, CDK2AP2, GATAD2A, GATAD2B, CHD3, CHD4 and CHD5. The exact stoichiometry of the NuRD complex is unknown, and some subunits such as MBD2 and MBD3, GATAD2A and GATAD2B, and CHD3, CHD4 and CHD5 define mutually exclusive NuRD complexes. Interacts with BCL6. Interacts with NACC2. Interacts with PWWP2B. Expressed in germinal centers of lymphoid tissues. No expression in nonepithelial cells.

The protein resides in the nucleus. Its subcellular location is the cytoplasm. Functionally, acts as a component of the histone deacetylase NuRD complex which participates in the remodeling of chromatin. Plays a role in maintenance of the normal epithelial architecture through the repression of SNAI1 transcription in a histone deacetylase-dependent manner, and thus the regulation of E-cadherin levels. Contributes to transcriptional repression by BCL6. This is Metastasis-associated protein MTA3 (MTA3) from Homo sapiens (Human).